Here is a 196-residue protein sequence, read N- to C-terminus: ATP synthase subunit b (196 aa).

The helical transmembrane segment at 24 to 44 (PLSELLIGTLSFALLVAFFFW) threads the bilayer.

It belongs to the ATPase B chain family. In terms of assembly, F-type ATPases have 2 components, F(1) - the catalytic core - and F(0) - the membrane proton channel. F(1) has five subunits: alpha(3), beta(3), gamma(1), delta(1), epsilon(1). F(0) has three main subunits: a(1), b(2) and c(10-14). The alpha and beta chains form an alternating ring which encloses part of the gamma chain. F(1) is attached to F(0) by a central stalk formed by the gamma and epsilon chains, while a peripheral stalk is formed by the delta and b chains.

Its subcellular location is the cell membrane. F(1)F(0) ATP synthase produces ATP from ADP in the presence of a proton or sodium gradient. F-type ATPases consist of two structural domains, F(1) containing the extramembraneous catalytic core and F(0) containing the membrane proton channel, linked together by a central stalk and a peripheral stalk. During catalysis, ATP synthesis in the catalytic domain of F(1) is coupled via a rotary mechanism of the central stalk subunits to proton translocation. In terms of biological role, component of the F(0) channel, it forms part of the peripheral stalk, linking F(1) to F(0). In Frankia casuarinae (strain DSM 45818 / CECT 9043 / HFP020203 / CcI3), this protein is ATP synthase subunit b.